The chain runs to 445 residues: Phosphoglucosamine mutase (445 aa).

Catalysis depends on S102, which acts as the Phosphoserine intermediate. Mg(2+) contacts are provided by S102, D240, D242, and D244. At S102 the chain carries Phosphoserine.

It belongs to the phosphohexose mutase family. Requires Mg(2+) as cofactor. Post-translationally, activated by phosphorylation.

The catalysed reaction is alpha-D-glucosamine 1-phosphate = D-glucosamine 6-phosphate. In terms of biological role, catalyzes the conversion of glucosamine-6-phosphate to glucosamine-1-phosphate. This Mycobacterium marinum (strain ATCC BAA-535 / M) protein is Phosphoglucosamine mutase.